The following is a 406-amino-acid chain: Tryptophan synthase beta chain (406 aa).

The residue at position 99 (Lys-99) is an N6-(pyridoxal phosphate)lysine.

The protein belongs to the TrpB family. Tetramer of two alpha and two beta chains. It depends on pyridoxal 5'-phosphate as a cofactor.

The catalysed reaction is (1S,2R)-1-C-(indol-3-yl)glycerol 3-phosphate + L-serine = D-glyceraldehyde 3-phosphate + L-tryptophan + H2O. The protein operates within amino-acid biosynthesis; L-tryptophan biosynthesis; L-tryptophan from chorismate: step 5/5. The beta subunit is responsible for the synthesis of L-tryptophan from indole and L-serine. In Sinorhizobium fredii (strain NBRC 101917 / NGR234), this protein is Tryptophan synthase beta chain.